The chain runs to 380 residues: Probable dual-specificity RNA methyltransferase RlmN (380 aa).

Residue E123 is the Proton acceptor of the active site. The 234-residue stretch at 129-362 (HEYGNSVCVT…VTIRREQGSD (234 aa)) folds into the Radical SAM core domain. C136 and C367 are joined by a disulfide. [4Fe-4S] cluster contacts are provided by C143, C147, and C150. S-adenosyl-L-methionine contacts are provided by residues 193-194 (GE), S225, 248-250 (SLH), and N324. C367 serves as the catalytic S-methylcysteine intermediate.

Belongs to the radical SAM superfamily. RlmN family. It depends on [4Fe-4S] cluster as a cofactor.

It is found in the cytoplasm. The enzyme catalyses adenosine(2503) in 23S rRNA + 2 reduced [2Fe-2S]-[ferredoxin] + 2 S-adenosyl-L-methionine = 2-methyladenosine(2503) in 23S rRNA + 5'-deoxyadenosine + L-methionine + 2 oxidized [2Fe-2S]-[ferredoxin] + S-adenosyl-L-homocysteine. The catalysed reaction is adenosine(37) in tRNA + 2 reduced [2Fe-2S]-[ferredoxin] + 2 S-adenosyl-L-methionine = 2-methyladenosine(37) in tRNA + 5'-deoxyadenosine + L-methionine + 2 oxidized [2Fe-2S]-[ferredoxin] + S-adenosyl-L-homocysteine. In terms of biological role, specifically methylates position 2 of adenine 2503 in 23S rRNA and position 2 of adenine 37 in tRNAs. In Lysinibacillus sphaericus (strain C3-41), this protein is Probable dual-specificity RNA methyltransferase RlmN.